The following is a 1577-amino-acid chain: MAP kinase-activating death domain protein (1577 aa).

One can recognise a uDENN domain in the interval 13 to 267 (YLVIVGARHP…VPVSGQKRVD (255 aa)). Residues 106 to 121 (KEKVEGGAGPRGKEGA) show a composition bias toward basic and acidic residues. The disordered stretch occupies residues 106–166 (KEKVEGGAGP…WGKRRAKAGS (61 aa)). Positions 123–140 (TSGASEEAATGSSESGST) are enriched in low complexity. The segment covering 141-156 (LQPPSADSTPDINQSP) has biased composition (polar residues). Ser-155 is modified (phosphoserine). One can recognise a cDENN domain in the interval 288–428 (RFTLVDFPLH…ESLELKKHLK (141 aa)). Residues 430–564 (ALASMSLNTQ…LNPSNYAFQR (135 aa)) form the dDENN domain. Disordered regions lie at residues 604-635 (LSVPPERDSDSDPTEDSGSDSQDYDDSSSSYS) and 676-840 (QPQK…NSTE). The segment covering 614–629 (SDPTEDSGSDSQDYDD) has biased composition (acidic residues). A phosphoserine mark is found at Ser-688 and Ser-691. The span at 688–698 (SENSQENPPLR) shows a compositional bias: polar residues. A compositionally biased stretch (low complexity) spans 699 to 715 (SSSSTTASSSPSTVVHS). A compositionally biased stretch (polar residues) spans 793–803 (PRFSQHVSGSR). 3 positions are modified to phosphoserine: Ser-812, Ser-817, and Ser-819. Low complexity predominate over residues 826–839 (RASSPNSTVSNNST). Ser-857, Ser-861, Ser-915, Ser-920, Ser-929, and Ser-1058 each carry phosphoserine. 3 disordered regions span residues 912–940 (QKSSVIKHSPTVKREPSSPQGRSSNSSEN), 1050–1109 (KEPD…DTRS), and 1127–1272 (EVKK…RSSE). A compositionally biased stretch (low complexity) spans 928-938 (SSPQGRSSNSS). Phosphothreonine is present on residues Thr-1060 and Thr-1065. Phosphoserine is present on Ser-1109. Basic and acidic residues predominate over residues 1127–1141 (EVKKQKALEKQRPEG). Polar residues predominate over residues 1157 to 1172 (QMSADSGVSLTSASQR). Low complexity predominate over residues 1189–1203 (SSSQDSEVSTVSNSS). Residues 1232–1248 (SRATLSDSEIETNSATS) are compositionally biased toward polar residues. A Phosphothreonine modification is found at Thr-1235. Phosphoserine occurs at positions 1237 and 1266. The region spanning 1336–1411 (GMDQGPQEMI…GLVYSQQVNE (76 aa)) is the Death domain.

Belongs to the MADD family. In terms of assembly, interacts (via death domain) with TNFRSF1A (via death domain). Interacts with PIDD1. Interacts with YWHAZ. Interacts (via death domain) with KIF1B; links the motor KIF1B to Rab3-carrying vesicles in anterograde synaptic vesicle transport. Interacts with KIF1A. Interacts (via uDENN domain) with RAB3A, RAB3B, RAB3C and RAB3D; the GTP-bound form of the Rab proteins is preferred for interaction. Expressed in the brain.

The protein localises to the cell membrane. It localises to the cytoplasm. It is found in the cell projection. The protein resides in the axon. In terms of biological role, guanyl-nucleotide exchange factor that regulates small GTPases of the Rab family. Converts GDP-bound inactive form of RAB27A and RAB27B to the GTP-bound active forms. Converts GDP-bound inactive form of RAB3A, RAB3C and RAB3D to the GTP-bound active forms, GTPases involved in synaptic vesicle exocytosis and vesicle secretion. Plays a role in synaptic vesicle formation and in vesicle trafficking at the neuromuscular junction. Involved in up-regulating a post-docking step of synaptic exocytosis in central synapses. Probably by binding to the motor proteins KIF1B and KIF1A, mediates motor-dependent transport of GTP-RAB3A-positive vesicles to the presynaptic nerve terminals. Plays a role in TNFA-mediated activation of the MAPK pathway, including ERK1/2. May link TNFRSF1A with MAP kinase activation. May be involved in the regulation of TNFA-induced apoptosis. The chain is MAP kinase-activating death domain protein from Mus musculus (Mouse).